We begin with the raw amino-acid sequence, 69 residues long: Antimicrobial peptide ISAMP (69 aa).

The signal sequence occupies residues 1–23 (MRAVAIFIVTLLVLECVYFVMSE).

As to expression, expressed in the fat body, hemocytes and salivary glands of partially-fed female ticks. Not expressed in the midgut.

The protein localises to the secreted. Has antimicrobial activity against B.cereus (MIC=5.8 ug/ml), B.subtilis (MIC=12.3 ug/ml), S.aureus (MIC=10.4 ug/ml), E.coli Edl 933 (MIC=3.2 ug/ml) and E.coli MG/655 (MIC=4.2 ug/ml). Non-hemolytic. The polypeptide is Antimicrobial peptide ISAMP (Ixodes scapularis (Black-legged tick)).